Reading from the N-terminus, the 303-residue chain is Large ribosomal subunit protein uL18 (303 aa).

This sequence belongs to the universal ribosomal protein uL18 family. Component of the large ribosomal subunit (LSU).

The protein resides in the cytoplasm. Its subcellular location is the nucleus. Its function is as follows. Component of the ribosome, a large ribonucleoprotein complex responsible for the synthesis of proteins in the cell. The small ribosomal subunit (SSU) binds messenger RNAs (mRNAs) and translates the encoded message by selecting cognate aminoacyl-transfer RNA (tRNA) molecules. The large subunit (LSU) contains the ribosomal catalytic site termed the peptidyl transferase center (PTC), which catalyzes the formation of peptide bonds, thereby polymerizing the amino acids delivered by tRNAs into a polypeptide chain. The nascent polypeptides leave the ribosome through a tunnel in the LSU and interact with protein factors that function in enzymatic processing, targeting, and the membrane insertion of nascent chains at the exit of the ribosomal tunnel. This Oikopleura dioica (Tunicate) protein is Large ribosomal subunit protein uL18 (RPL5).